Reading from the N-terminus, the 203-residue chain is Outer-membrane lipoprotein LolB (203 aa).

The first 16 residues, Met1–Gly16, serve as a signal peptide directing secretion. A lipid anchor (N-palmitoyl cysteine) is attached at Cys17. Residue Cys17 is the site of S-diacylglycerol cysteine attachment.

The protein belongs to the LolB family. As to quaternary structure, monomer.

Its subcellular location is the cell outer membrane. Its function is as follows. Plays a critical role in the incorporation of lipoproteins in the outer membrane after they are released by the LolA protein. This Psychromonas ingrahamii (strain DSM 17664 / CCUG 51855 / 37) protein is Outer-membrane lipoprotein LolB.